Consider the following 300-residue polypeptide: Bifunctional protein FolD 1 (300 aa).

NADP(+) contacts are provided by residues 166–168 (GRS), Ser-191, and Ile-232.

This sequence belongs to the tetrahydrofolate dehydrogenase/cyclohydrolase family. In terms of assembly, homodimer.

It catalyses the reaction (6R)-5,10-methylene-5,6,7,8-tetrahydrofolate + NADP(+) = (6R)-5,10-methenyltetrahydrofolate + NADPH. It carries out the reaction (6R)-5,10-methenyltetrahydrofolate + H2O = (6R)-10-formyltetrahydrofolate + H(+). It participates in one-carbon metabolism; tetrahydrofolate interconversion. Its function is as follows. Catalyzes the oxidation of 5,10-methylenetetrahydrofolate to 5,10-methenyltetrahydrofolate and then the hydrolysis of 5,10-methenyltetrahydrofolate to 10-formyltetrahydrofolate. The chain is Bifunctional protein FolD 1 from Roseobacter denitrificans (strain ATCC 33942 / OCh 114) (Erythrobacter sp. (strain OCh 114)).